Reading from the N-terminus, the 143-residue chain is Boletus edulis lectin (143 aa).

Beta-D-Gal-(1-&gt;3)-alpha-D-GalNAc-binding positions include Ala-30, 49 to 50 (SG), and 72 to 73 (HN). Residues 49–50 (SG) and 72–73 (HN) each bind N-acetyl-alpha-D-galactosamine. Residues 79–82 (DVVT), Arg-103, and Tyr-114 contribute to the N,N'-diacetylchitobiose site. N-acetyl-alpha-D-glucosamine is bound by residues 79 to 82 (DVVT), Arg-103, and Tyr-114.

The protein belongs to the fungal fruit body lectin family. Homotetramer.

In terms of biological role, lectin that recognizes O-linked galactose-beta-1,3-N-acetylgalactosamine, a disaccharide (Thomsen-Friedenreich antigen or T-disaccharide), present on cell surface glycoproteins. Can also bind chitin, N,N'-diacetylchitobiose, N-acetylgalactosamine and N-acetylglucosamine. Inhibits proliferation of colon, breast and liver cancer cell lines (in vitro). In Boletus edulis (King bolete), this protein is Boletus edulis lectin.